The primary structure comprises 523 residues: NEDD8-activating enzyme E1 regulatory subunit AXL (523 aa).

This sequence belongs to the ubiquitin-activating E1 family. ULA1 subfamily. In terms of assembly, heterodimer of ECR1 and AXL1. The complex binds to RUB1/NEDD8 and RCE1.

It is found in the nucleus. It participates in protein modification; protein neddylation. In terms of biological role, regulatory subunit of the dimeric ECR1-AXL1 E1 enzyme. E1 activates RUB1/NEDD8 by first adenylating its C-terminal glycine residue with ATP, thereafter linking this residue to the side chain of the catalytic cysteine, yielding a RUB1-ECR1 thioester and free AMP. E1 finally transfers RUB1 to the catalytic cysteine of RCE1. May function redundantly with AXR1 in the RUB conjugating pathway. Seems not to be functionally equivalent to AXR1 in vivo. This is NEDD8-activating enzyme E1 regulatory subunit AXL from Arabidopsis thaliana (Mouse-ear cress).